A 209-amino-acid polypeptide reads, in one-letter code: GTP cyclohydrolase 1 (209 aa).

Zn(2+) is bound by residues Cys89, His92, and Cys163.

The protein belongs to the GTP cyclohydrolase I family. In terms of assembly, toroid-shaped homodecamer, composed of two pentamers of five dimers.

The enzyme catalyses GTP + H2O = 7,8-dihydroneopterin 3'-triphosphate + formate + H(+). It participates in cofactor biosynthesis; 7,8-dihydroneopterin triphosphate biosynthesis; 7,8-dihydroneopterin triphosphate from GTP: step 1/1. The chain is GTP cyclohydrolase 1 from Sulfolobus acidocaldarius (strain ATCC 33909 / DSM 639 / JCM 8929 / NBRC 15157 / NCIMB 11770).